The chain runs to 100 residues: Small ribosomal subunit protein uS14c (100 aa).

It belongs to the universal ribosomal protein uS14 family. Part of the 30S ribosomal subunit.

It is found in the plastid. The protein localises to the chloroplast. Its function is as follows. Binds 16S rRNA, required for the assembly of 30S particles. This is Small ribosomal subunit protein uS14c from Phalaenopsis aphrodite subsp. formosana (Moth orchid).